Consider the following 1261-residue polypeptide: Rho GTPase-activating protein 29 (1261 aa).

Residues Ser171, Ser176, Ser179, and Ser190 each carry the phosphoserine modification. The F-BAR domain maps to 192-462 (LELDNVLLKN…SAKLYDPGQE (271 aa)). Residues 296–418 (RKNEMEKQRK…EILAQLRTLV (123 aa)) are a coiled coil. The tract at residues 481–501 (NVNKHLNSSQPSGFGPANSLE) is disordered. Phosphoserine occurs at positions 499, 519, and 552. Low complexity predominate over residues 541–559 (SESTGGSSESRSLDSESIS). The segment at 541-600 (SESTGGSSESRSLDSESISPGDFHRKLPRTPSSGTMSSADDLDEREPPSPSETGPNSLGT) is disordered. Residues 612-657 (THKFRKLRSPTKCRDCEGIVVFQGVECEECLLVCHRKCLENLVIIC) form a Phorbol-ester/DAG-type zinc finger. The region spanning 671–886 (AEFTQVAKKE…FLITYSQKIF (216 aa)) is the Rho-GAP domain. Phosphoserine occurs at positions 913 and 949. The tract at residues 981–1011 (SASQKIEDGKTPKPLSLKSDRSTNNVERHTP) is disordered. The segment covering 998–1010 (KSDRSTNNVERHT) has biased composition (basic and acidic residues). Phosphoserine is present on residues Ser1019, Ser1144, and Ser1146. Disordered regions lie at residues 1117–1153 (HSIN…APVR) and 1178–1238 (GNEE…VNPM). Basic and acidic residues predominate over residues 1133 to 1144 (RSVREASERRSS). The interaction with PTPN13/PTPL1 stretch occupies residues 1258–1261 (PQFV).

Interacts with PTPN13/PTPL1. Interacts with RAP2A via its coiled coil domain. Interacts with RASIP1. In terms of tissue distribution, widely expressed. Highly expressed in skeletal muscle and heart. Expressed at intermediate level in placenta, liver and pancreas. Weakly expressed in brain, lung and kidney.

GTPase activator for the Rho-type GTPases by converting them to an inactive GDP-bound state. Has strong activity toward RHOA, and weaker activity toward RAC1 and CDC42. May act as a specific effector of RAP2A to regulate Rho. In concert with RASIP1, suppresses RhoA signaling and dampens ROCK and MYH9 activities in endothelial cells and plays an essential role in blood vessel tubulogenesis. The polypeptide is Rho GTPase-activating protein 29 (ARHGAP29) (Homo sapiens (Human)).